The chain runs to 457 residues: Heme sensor protein HssS (457 aa).

Helical transmembrane passes span 9-29 (IAIYSITVILFSALISFVLTN) and 164-184 (TFLAVLLMLLLFISISLVIAS). The region spanning 186–238 (YSIIRPVKKLKLATERLIDGDFETPIKQTRKDEIGTLQYHFNKMRESLGQVDQ) is the HAMP domain. The Histidine kinase domain occupies 246-456 (NVSHEIKTPL…TFTITLPNNS (211 aa)). Residue His249 is modified to Phosphohistidine; by autocatalysis.

In terms of processing, autophosphorylated.

It is found in the cell membrane. The enzyme catalyses ATP + protein L-histidine = ADP + protein N-phospho-L-histidine.. Functionally, member of the two-component regulatory system HssS/HssR involved in intracellular heme homeostasis and tempering of staphylococcal virulence. HssS functions as a heme sensor histidine kinase which is autophosphorylated at a histidine residue and transfers its phosphate group to an aspartate residue of HssR. HssR/HssS activates the expression of hrtAB, an efflux pump, in response to extracellular heme, hemin, hemoglobin or blood. The protein is Heme sensor protein HssS (hssS) of Staphylococcus aureus (strain USA300).